The sequence spans 919 residues: Probable disease resistance protein At4g27220 (919 aa).

Coiled coils occupy residues 1–30 (MFRSNARALNRALERLKNVQTKVNEALKRS) and 74–95 (VEILEKVKRLEEQGQDLIKKIS). An NB-ARC domain is found at 121 to 399 (MLDKLKDCLK…AEGLLDGQHH (279 aa)). 141–148 (GMGGVGKT) contacts ATP. LRR repeat units follow at residues 447–468 (GEGFHSLVMAGRGLIEFPQDKF), 469–492 (VSSVQRVSLMANKLERLPNNVIEG), 494–516 (ETLVLLLQGNSHVKEVPNGFLQA), 519–540 (NLRILDLSGVRIRTLPDSFSNL), 542–564 (SLRSLVLRNCKKLRNLPSLESLV), 565–587 (KLQFLDLHESAIRELPRGLEALS), 588–610 (SLRYICVSNTYQLQSIPAGTILQ), and 611–635 (LSSLEVLDMAGSAYSWGIKGEEREG).

It belongs to the disease resistance NB-LRR family.

Probable disease resistance protein. The protein is Probable disease resistance protein At4g27220 of Arabidopsis thaliana (Mouse-ear cress).